Here is a 295-residue protein sequence, read N- to C-terminus: Probable protein phosphatase 2C 6 (295 aa).

One can recognise a PPM-type phosphatase domain in the interval 23 to 294 (QYAATHMQGW…DNMTCILIQF (272 aa)). Residues Asp57, Gly58, Asp237, and Asp285 each contribute to the Mn(2+) site.

It belongs to the PP2C family. Mg(2+) serves as cofactor. The cofactor is Mn(2+).

The protein resides in the membrane. The enzyme catalyses O-phospho-L-seryl-[protein] + H2O = L-seryl-[protein] + phosphate. The catalysed reaction is O-phospho-L-threonyl-[protein] + H2O = L-threonyl-[protein] + phosphate. Enzyme with a broad specificity. This is Probable protein phosphatase 2C 6 from Paramecium tetraurelia.